Reading from the N-terminus, the 563-residue chain is MVYTKHIIVHKLKHLRQAKDYVENAEKTLVNESNEDHLTNLFPYISNPDKTMSKQLVSGHGITNVYDAANEFIATKKLKALSKGTDFNFDPQTGKVRFNVESLEKNNAVLGHHLIQSFSPDDNLTPEQIHEIGRQTILEFTGGEYEFVIATHVDREHIHNHIIFNSTNLYTGKQFDWKVIPKEKTKSGKAYDVTKNNFEKVSDKIASRYGAKIIEKSPGNSHLKYTKWQTQSIYKSQIKQRLDYLLEMSSDIEDFKRKATALNLSFDFSGKWTTYRLLDEPQMKNTRGRNLDKNRPEKYNLESIIERLETNELSLTVDEVVERYEEKVDVVKQDFDYQVTVEKGQIDHMTSKGFYLNVDFGIADRGQIFIGGYKVDQLENRDCVLYLKKNETFRLLSEKEASFTKYLTGHDLAKQLGLYNGTVPLKKEPVISTINQLVDAINFLAEHGVTEGTQFNNMESQLMSALGEAEEKLYVIDNKIMELTKIAKLLIEKESDHSQAVINELENLGVGPSIKYQDIHQELQSEKMSRKILKNKFEQTVDEINTFNEIRVTTLEENKGKIL.

Y44 is an active-site residue. Mg(2+) contacts are provided by H159 and H161.

This sequence belongs to the mobilization (MOB) protein type 1 family. Requires Mg(2+) as cofactor. The cofactor is Mn(2+).

Its function is as follows. Mediates initiation of conjugal transfer possibly by introducing a single-stranded nick at the potential origin of transfer. The protein is Group II intron-interrupted relaxase LtrB (ltrBE1) of Lactococcus lactis subsp. cremoris (strain MG1363).